The chain runs to 764 residues: Polyribonucleotide nucleotidyltransferase (764 aa).

Mg(2+)-binding residues include Asp555 and Asp561. The KH domain occupies 621 to 680; sequence PHITSINIPQNKIGEVIGPKGKTINQITEETGANITIEDDGTVFISAVGGESAREAEEKI. The region spanning 692–761 is the S1 motif domain; it reads GDRFLGTVVK…NRGKISLVLV (70 aa).

Belongs to the polyribonucleotide nucleotidyltransferase family. The cofactor is Mg(2+).

The protein resides in the cytoplasm. It carries out the reaction RNA(n+1) + phosphate = RNA(n) + a ribonucleoside 5'-diphosphate. Involved in mRNA degradation. Catalyzes the phosphorolysis of single-stranded polyribonucleotides processively in the 3'- to 5'-direction. This is Polyribonucleotide nucleotidyltransferase from Corynebacterium jeikeium (strain K411).